A 249-amino-acid polypeptide reads, in one-letter code: Probable phosphatase Spea_1436 (249 aa).

Zn(2+) is bound by residues H8, H10, H16, H41, E74, H102, H132, D193, and H195.

Belongs to the PHP family. The cofactor is Zn(2+).

In Shewanella pealeana (strain ATCC 700345 / ANG-SQ1), this protein is Probable phosphatase Spea_1436.